The chain runs to 502 residues: Cytochrome P450 71A1 (502 aa).

The chain crosses the membrane as a helical span at residues 7–21; it reads LLFLAIALTFFLLKL. Cys443 serves as a coordination point for heme.

This sequence belongs to the cytochrome P450 family. The cofactor is heme. Mesocarp.

It is found in the microsome membrane. The protein resides in the endoplasmic reticulum membrane. In terms of biological role, involved in the metabolism of compounds associated with the development of flavor in the ripening fruit process, possibly by acting as trans-cinnamic acid 4-hydrolase. The protein is Cytochrome P450 71A1 (CYP71A1) of Persea americana (Avocado).